Here is a 968-residue protein sequence, read N- to C-terminus: Translation initiation factor IF-2 (968 aa).

The segment covering Lys-305 to Ala-319 has biased composition (low complexity). The tract at residues Lys-305–Thr-376 is disordered. Residues Pro-468–Glu-635 form the tr-type G domain. Residues Gly-477–Thr-484 form a G1 region. A GTP-binding site is contributed by Gly-477–Thr-484. Positions Gly-502 to His-506 are G2. Residues Asp-523 to Gly-526 are G3. Residues Asp-523 to His-527 and Asn-577 to Asp-580 each bind GTP. A G4 region spans residues Asn-577 to Asp-580. Residues Ser-613 to Arg-615 are G5.

This sequence belongs to the TRAFAC class translation factor GTPase superfamily. Classic translation factor GTPase family. IF-2 subfamily.

The protein resides in the cytoplasm. One of the essential components for the initiation of protein synthesis. Protects formylmethionyl-tRNA from spontaneous hydrolysis and promotes its binding to the 30S ribosomal subunits. Also involved in the hydrolysis of GTP during the formation of the 70S ribosomal complex. The sequence is that of Translation initiation factor IF-2 from Polaromonas sp. (strain JS666 / ATCC BAA-500).